A 283-amino-acid chain; its full sequence is 1-deoxypentalenic acid 11-beta-hydroxylase (283 aa).

Residue Arg117 participates in substrate binding. His135 and Asp137 together coordinate Fe cation. Residues 135–137 (HQD) and Trp151 contribute to the 2-oxoglutarate site. Arg186 is a binding site for substrate. Position 224 (His224) interacts with Fe cation. Residues Ser226 and Arg238 each contribute to the 2-oxoglutarate site. The interval 260 to 283 (WPESAKDASKGILSKITGTPTTAE) is disordered.

The protein belongs to the PhyH family. Requires Fe cation as cofactor. The cofactor is L-ascorbate.

The enzyme catalyses 1-deoxypentalenate + 2-oxoglutarate + O2 = 1-deoxy-11beta-hydroxypentalenate + succinate + CO2. It functions in the pathway antibiotic biosynthesis; pentalenolactone biosynthesis. Its function is as follows. Catalyzes the conversion of 1-deoxypentalenic acid to 11-beta-hydroxy-1-deoxypentalenic acid in the biosynthesis of pentalenolactone antibiotic. The polypeptide is 1-deoxypentalenic acid 11-beta-hydroxylase (penH) (Streptomyces exfoliatus (Streptomyces hydrogenans)).